A 49-amino-acid polypeptide reads, in one-letter code: Large ribosomal subunit protein bL33 (49 aa).

Belongs to the bacterial ribosomal protein bL33 family.

The sequence is that of Large ribosomal subunit protein bL33 from Lachnoclostridium phytofermentans (strain ATCC 700394 / DSM 18823 / ISDg) (Clostridium phytofermentans).